The following is a 252-amino-acid chain: Protein UL24 homolog (252 aa).

A disordered region spans residues 211-252 (KASKSVLTKTSGENRSRASRQVAKNAPKNRIRRTAKKDAKRQ). The segment covering 212-223 (ASKSVLTKTSGE) has biased composition (polar residues). Basic residues predominate over residues 237 to 252 (PKNRIRRTAKKDAKRQ).

It belongs to the herpesviridae UL24 family.

Its subcellular location is the virion. The protein resides in the host cytoplasm. It localises to the host nucleus. It is found in the host nucleolus. The protein localises to the host Golgi apparatus. Functionally, may participate in nuclear egress of viral particles. Plays a role in the dispersal of several host nucleolar proteins including NCL/nucleolin and NPM1. Since deletion of host NCL/nucleolin negatively impact on nuclear egress, UL24 supposedly acts on this process through its effect on host nucleoli. This chain is Protein UL24 homolog (U49), found in Homo sapiens (Human).